The primary structure comprises 249 residues: 2,3-bisphosphoglycerate-dependent phosphoglycerate mutase (249 aa).

Residues 9-16, 22-23, Arg61, 88-91, Lys99, 115-116, and 184-185 each bind substrate; these read RHGQSQWN, TG, ERHY, RR, and GN. The active-site Tele-phosphohistidine intermediate is His10. Glu88 (proton donor/acceptor) is an active-site residue.

This sequence belongs to the phosphoglycerate mutase family. BPG-dependent PGAM subfamily. In terms of assembly, homodimer.

It catalyses the reaction (2R)-2-phosphoglycerate = (2R)-3-phosphoglycerate. It participates in carbohydrate degradation; glycolysis; pyruvate from D-glyceraldehyde 3-phosphate: step 3/5. Catalyzes the interconversion of 2-phosphoglycerate and 3-phosphoglycerate. This Xanthomonas campestris pv. campestris (strain 8004) protein is 2,3-bisphosphoglycerate-dependent phosphoglycerate mutase.